We begin with the raw amino-acid sequence, 69 residues long: Large ribosomal subunit protein uL29 (69 aa).

It belongs to the universal ribosomal protein uL29 family.

The chain is Large ribosomal subunit protein uL29 from Carboxydothermus hydrogenoformans (strain ATCC BAA-161 / DSM 6008 / Z-2901).